A 342-amino-acid polypeptide reads, in one-letter code: Succinylglutamate desuccinylase (342 aa).

Zn(2+) is bound by residues histidine 63, glutamate 66, and histidine 155. Glutamate 219 is a catalytic residue.

Belongs to the AspA/AstE family. Succinylglutamate desuccinylase subfamily. Requires Zn(2+) as cofactor.

The catalysed reaction is N-succinyl-L-glutamate + H2O = L-glutamate + succinate. Its pathway is amino-acid degradation; L-arginine degradation via AST pathway; L-glutamate and succinate from L-arginine: step 5/5. Functionally, transforms N(2)-succinylglutamate into succinate and glutamate. In Vibrio cholerae serotype O1 (strain ATCC 39315 / El Tor Inaba N16961), this protein is Succinylglutamate desuccinylase.